Reading from the N-terminus, the 339-residue chain is MSTHLRKLPGLLLCLLLALPAWYLGRLFPIIGAPVFAILLGMLLALFYGHRDKTKEGISFTSKCILQTAVVLLGFGLNLTQVMAVGMQSLPIIISTIATALLVAYGLQKWLRLDVNTATLVGVGSSICGGSAIAATAPVIKAKDDEVAKAISVIFLFNMLAALLFPSLGQLLGLSNEGFAIFAGTAVNDTSSVTATATAWDAIHHSNTLDGATIVKLTRTLAILPITLGLSLYRAKKEHDIVTEENFSLRKSFPRFILFFLLASLITTLMTSFGVSAEVFHSLKTLSKFFIVMAMAAIGLNTNLVKLIKTGGQAILLGAICWVAITLVSLAMQLSLGIW.

9 helical membrane passes run 7-24 (KLPG…AWYL), 28-50 (FPII…FYGH), 57-79 (GISF…GLNL), 84-106 (AVGM…VAYG), 118-140 (ATLV…APVI), 150-172 (AISV…GQLL), 256-275 (FILF…SFGV), 290-307 (FIVM…LVKL), and 314-336 (AILL…QLSL).

The protein belongs to the UPF0324 family.

Its subcellular location is the cell membrane. The polypeptide is UPF0324 membrane protein spyM18_1033 (Streptococcus pyogenes serotype M18 (strain MGAS8232)).